Here is a 135-residue protein sequence, read N- to C-terminus: Transcription antitermination protein NusB (135 aa).

This sequence belongs to the NusB family.

In terms of biological role, involved in transcription antitermination. Required for transcription of ribosomal RNA (rRNA) genes. Binds specifically to the boxA antiterminator sequence of the ribosomal RNA (rrn) operons. The chain is Transcription antitermination protein NusB from Shewanella pealeana (strain ATCC 700345 / ANG-SQ1).